A 251-amino-acid polypeptide reads, in one-letter code: uncharacterized protein (251 aa).

N-linked (GlcNAc...) asparagine; by host glycans are attached at residues N149, N152, and N207. A helical transmembrane segment spans residues 226 to 246 (YLIFIIIIIIFIILILLWIKY).

The protein belongs to the glycosyltransferase 32 family.

It is found in the membrane. This is an uncharacterized protein from Acanthamoeba polyphaga (Amoeba).